The following is a 1164-amino-acid chain: Protein PLASTID MOVEMENT IMPAIRED 1-RELATED 1 (1164 aa).

The interval 30–54 (KNPRGSVAGSNKTPTKPLSRSNLAE) is disordered. Over residues 37 to 51 (AGSNKTPTKPLSRSN) the composition is skewed to polar residues. Residues 69 to 217 (INHVRNRRFN…TLSMSFGYTV (149 aa)) enclose the C2 NT-type domain. Polar residues predominate over residues 224-263 (PASSGSTQNFRSSSNVKQTSNNTGLTRAISAKSSLGNGKS). Disordered regions lie at residues 224–268 (PASS…SRRY), 466–486 (APEE…PKDA), 1038–1063 (SELK…PMEE), and 1124–1164 (GSAK…IMPK). Basic and acidic residues-rich tracts occupy residues 469 to 486 (EGNK…PKDA) and 1052 to 1062 (SDAKKEEKPME).

The protein resides in the cytoplasm. Functionally, together with PMI1, necessary for chloroplast and nuclear photorelocation movements via the regulation of chloroplast-actin (cp-actin) filaments in pavement cells. This chain is Protein PLASTID MOVEMENT IMPAIRED 1-RELATED 1, found in Arabidopsis thaliana (Mouse-ear cress).